Consider the following 350-residue polypeptide: MASTGSQASDIDKIFGFFNDGEPPTKKPRKLLPSLKTKKPRELVLVIGTGISAAVAPQVPALKSWKGLIQALLDAAIDFDLLEDEESKKFQKCLHEDKNLVHVAHDLIQKLSPRTSNVRSTFFKDCLYEVFDDLESKMEDSGKQLLQSVLHLMENGALVLTTNFDNLLELYAADQGKQLESLDLTDEKKVLEWAQEKRKLSVLHIHGVYTNPSGIVLHPAGYQNVLRNTEVMREIQKLYENKSFLFLGCGWTVDDTTFQALFLEAVKHKSDLEHFMLVRRGDVDEFKKLRENMLDKGIKVISYGNDYADLPEYFKRLTCEISTRGRSGMAREGQLNGSSAAHGEIRGCST.

A2 carries the N-acetylalanine modification. S9 is modified (phosphoserine). The tract at residues 330 to 350 (AREGQLNGSSAAHGEIRGCST) is disordered.

This sequence belongs to the FAM118 family.

The protein resides in the nucleus. It is found in the cajal body. Functionally, may play a role in Cajal bodies formation. This Rattus norvegicus (Rat) protein is Protein FAM118B (Fam118b).